A 603-amino-acid chain; its full sequence is UvrABC system protein C (603 aa).

Residues 15–92 (DQPGCYLMKD…IKKHDPRFNI (78 aa)) enclose the GIY-YIG domain. Positions 197–232 (KTVKNDLMKKMQEAAENMEFEKAGEFRDQINAIETT) constitute a UVR domain.

It belongs to the UvrC family. In terms of assembly, interacts with UvrB in an incision complex.

It is found in the cytoplasm. Functionally, the UvrABC repair system catalyzes the recognition and processing of DNA lesions. UvrC both incises the 5' and 3' sides of the lesion. The N-terminal half is responsible for the 3' incision and the C-terminal half is responsible for the 5' incision. In Listeria monocytogenes serotype 4a (strain HCC23), this protein is UvrABC system protein C.